We begin with the raw amino-acid sequence, 467 residues long: Venom prothrombin activator pseutarin-C catalytic subunit (467 aa).

Positions 1–22 (MAPQLLLCLILTFLWSLPEAES) are cleaved as a signal peptide. Positions 23–40 (NVFLKSKVANRFLQRTKR) are excised as a propeptide. Residues 41 to 86 (ANSLVEEFKSGNIERECIEERCSKEEAREVFEDDEKTETFWNVYVD) enclose the Gla domain. 4-carboxyglutamate occurs at positions 46, 47, 54, 56, 59, 60, 65, 66, 69, and 72. A disulfide bond links C57 and C62. The 37-residue stretch at 86-122 (DGDQCSSNPCHYRGICKDGIGSYTCTCLSGYEGKNCE) folds into the EGF-like 1; calcium-binding domain. 11 cysteine pairs are disulfide-bonded: C90–C101, C95–C110, C112–C121, C129–C140, C136–C149, C151–C164, C172–C329, C216–C221, C236–C252, C377–C391, and C402–C430. The O-linked (Hex...) serine glycan is linked to S92. Residues 129 to 164 (CRVDNGNCWHFCKSVQNDIQCSCAEGYLLGEDGHSC) form the EGF-like 2 domain. A propeptide spans 182 to 209 (REASLPDFVQSHNATLLKKSDNPSPDIR) (activation peptide). Residues 210 to 454 (IVNGMDCKLG…FIPWIKRIMR (245 aa)) form the Peptidase S1 domain. H251 serves as the catalytic Charge relay system. N-linked (GlcNAc...) asparagine glycosylation is present at N254. The active-site Charge relay system is D309. The active-site Charge relay system is the S406.

The protein belongs to the peptidase S1 family. Snake venom subfamily. As to quaternary structure, heterodimer of a light and a heavy chains; disulfide-linked. Is associated with pseutarin-C non-catalytic subunit (AC Q7SZN0) in a non-covalent manner. Post-translationally, gamma-carboxyglutamate residues are formed by vitamin K dependent carboxylation. These residues are essential for the binding of calcium. In terms of tissue distribution, expressed by the venom gland.

The protein resides in the secreted. The catalysed reaction is Selective cleavage of Arg-|-Thr and then Arg-|-Ile bonds in prothrombin to form thrombin.. Its activity is regulated as follows. Activated by calcium and negatively charged phospholipids. In terms of biological role, snake prothrombin activator that attacks the hemostatic system of prey. This non-catalytic subunit is functionally similar to blood coagulation factor V. It serves as a critical cofactor for the prothrombinase activity of the catalytic subunit, which is similar to the blood coagulation factor X. The complex converts prothrombin to thrombin by sequential cleavage at two positions, Arg-320 followed by Arg-271. Cleavage at Arg-320 produces an active intermediate known as meizothrombin. Meizothrombin is the 'second' substrate for prothrombinase, and it docks in an altered manner to present the second cleavage site (271). Cleavage at Arg-271 releases active thrombin from its pro-fragment. This order of events is reversed if the protease component of prothrombinase is used on its own, suggesting that the 271 site is inherently more accessible to proteolysis. The complex converts prothrombin to thrombin in presence but also in the absence of membrane. The chain is Venom prothrombin activator pseutarin-C catalytic subunit from Pseudonaja textilis (Eastern brown snake).